We begin with the raw amino-acid sequence, 176 residues long: Large ribosomal subunit protein uL6 (176 aa).

The protein belongs to the universal ribosomal protein uL6 family. As to quaternary structure, part of the 50S ribosomal subunit.

Functionally, this protein binds to the 23S rRNA, and is important in its secondary structure. It is located near the subunit interface in the base of the L7/L12 stalk, and near the tRNA binding site of the peptidyltransferase center. The polypeptide is Large ribosomal subunit protein uL6 (Paraburkholderia phymatum (strain DSM 17167 / CIP 108236 / LMG 21445 / STM815) (Burkholderia phymatum)).